The primary structure comprises 379 residues: (R)-2-hydroxyglutaryl-CoA dehydratase, subunit beta (379 aa).

Belongs to the FldB/FldC dehydratase alpha/beta subunit family. As to quaternary structure, the (R)-2-hydroxyglutaryl-CoA dehydratase enzyme system is a heterodimer composed of an alpha subunit (HgdA) and a beta subunit (HgdB). It depends on [4Fe-4S] cluster as a cofactor. FMN is required as a cofactor. Mg(2+) serves as cofactor.

It localises to the cytoplasm. It catalyses the reaction (R)-2-hydroxyglutaryl-CoA = (2E)-glutaconyl-CoA + H2O. Its pathway is amino-acid degradation; L-glutamate degradation via hydroxyglutarate pathway; crotonoyl-CoA from L-glutamate: step 4/5. Its activity is regulated as follows. Activated by the HgdC. Reversibly inactivated by oxidants such as 2-nitrophenol, 3-nitrophenol, 4-nitrophenol, 4-nitrobenzoate, carbonyl cyanide 4-(trifluoromethoxy)phenylhydrazone (FCCP) and chloramphenicol. Irreversibly inactivated by oxidants such as hydroxylamine and nitrite. Involved in the fermentation of L-glutamate via the hydroxyglutarate pathway. Catalyzes the reversible syn-elimination of water from (R)-2-hydroxyglutaryl-CoA to yield (E)-glutaconyl-CoA. The dehydration mechanism involves a transient one electron reduction of the thioester from (R)-2-hydroxyglutaryl-CoA, generating a ketyl radical. Prior to (E)-glutaconyl-CoA formation, the ketyl radical is subsequently reoxidized by electron transfer back to the HgdA-HgdB complex (CompD) to avoid change in oxidation state of the substrate. The appropriate redox state of dehydratase HgdA-HgdB complex (CompD) is maintained by HgdC (CompA) via hydrolysis of ATP and ATP-dependent electron transfer. Since the electron is recycled, the dehydratase is able to perform several turnovers with only catalytic amounts of ATP and substoichiometric amounts of HgdC (CompA). This Acidaminococcus fermentans (strain ATCC 25085 / DSM 20731 / CCUG 9996 / CIP 106432 / VR4) protein is (R)-2-hydroxyglutaryl-CoA dehydratase, subunit beta.